We begin with the raw amino-acid sequence, 474 residues long: Bifunctional protein HldE (474 aa).

A ribokinase region spans residues methionine 1–glutamate 318. Asparagine 194 to glutamate 197 contacts ATP. Aspartate 263 is an active-site residue. Residues phenylalanine 343–glycine 474 are cytidylyltransferase.

The protein in the N-terminal section; belongs to the carbohydrate kinase PfkB family. In the C-terminal section; belongs to the cytidylyltransferase family. Homodimer.

The enzyme catalyses D-glycero-beta-D-manno-heptose 7-phosphate + ATP = D-glycero-beta-D-manno-heptose 1,7-bisphosphate + ADP + H(+). The catalysed reaction is D-glycero-beta-D-manno-heptose 1-phosphate + ATP + H(+) = ADP-D-glycero-beta-D-manno-heptose + diphosphate. The protein operates within nucleotide-sugar biosynthesis; ADP-L-glycero-beta-D-manno-heptose biosynthesis; ADP-L-glycero-beta-D-manno-heptose from D-glycero-beta-D-manno-heptose 7-phosphate: step 1/4. It functions in the pathway nucleotide-sugar biosynthesis; ADP-L-glycero-beta-D-manno-heptose biosynthesis; ADP-L-glycero-beta-D-manno-heptose from D-glycero-beta-D-manno-heptose 7-phosphate: step 3/4. In terms of biological role, catalyzes the phosphorylation of D-glycero-D-manno-heptose 7-phosphate at the C-1 position to selectively form D-glycero-beta-D-manno-heptose-1,7-bisphosphate. Functionally, catalyzes the ADP transfer from ATP to D-glycero-beta-D-manno-heptose 1-phosphate, yielding ADP-D-glycero-beta-D-manno-heptose. This chain is Bifunctional protein HldE, found in Pseudomonas syringae pv. tomato (strain ATCC BAA-871 / DC3000).